A 299-amino-acid chain; its full sequence is ATP phosphoribosyltransferase (299 aa).

This sequence belongs to the ATP phosphoribosyltransferase family. Long subfamily. Equilibrium between an active dimeric form, an inactive hexameric form and higher aggregates. Interconversion between the various forms is largely reversible and is influenced by the natural substrates and inhibitors of the enzyme. It depends on Mg(2+) as a cofactor.

It localises to the cytoplasm. It carries out the reaction 1-(5-phospho-beta-D-ribosyl)-ATP + diphosphate = 5-phospho-alpha-D-ribose 1-diphosphate + ATP. The protein operates within amino-acid biosynthesis; L-histidine biosynthesis; L-histidine from 5-phospho-alpha-D-ribose 1-diphosphate: step 1/9. Its activity is regulated as follows. Feedback inhibited by histidine. In terms of biological role, catalyzes the condensation of ATP and 5-phosphoribose 1-diphosphate to form N'-(5'-phosphoribosyl)-ATP (PR-ATP). Has a crucial role in the pathway because the rate of histidine biosynthesis seems to be controlled primarily by regulation of HisG enzymatic activity. The chain is ATP phosphoribosyltransferase from Salmonella choleraesuis (strain SC-B67).